Reading from the N-terminus, the 289-residue chain is MLSIFNIWGTFNRVLFFLSLTVSLAGLAGNTLLLWHLGLRIKKGPFNTYLLHLAAADFLFLSCQVGFSIAKIASGYEDTLYFPVTFLWFAVGLWLLAAFIVDCCLSYMFPSFCGPNCRPRYTSFVLCLVIWALTMLAVLLPANACGLLYNRMSLLVCLKYHWVSVVWLGVLASTACGASMFLLVFGNCCSSQPPSKFCKLAQCSGILLFFCRLPLVFYWCLRPVIKFLLPFFFPLATLLACIDSSAKPLLYYLKGRQLRKEPLQVALNRALGEESQSSSGGISLPMSRV.

The Extracellular segment spans residues 1–13; sequence MLSIFNIWGTFNR. The chain crosses the membrane as a helical span at residues 14-34; the sequence is VLFFLSLTVSLAGLAGNTLLL. Topologically, residues 35–49 are cytoplasmic; that stretch reads WHLGLRIKKGPFNTY. The chain crosses the membrane as a helical span at residues 50–70; it reads LLHLAAADFLFLSCQVGFSIA. The Extracellular segment spans residues 71–80; it reads KIASGYEDTL. A helical membrane pass occupies residues 81-101; that stretch reads YFPVTFLWFAVGLWLLAAFIV. The Cytoplasmic portion of the chain corresponds to 102-123; it reads DCCLSYMFPSFCGPNCRPRYTS. Residues 124–144 form a helical membrane-spanning segment; sequence FVLCLVIWALTMLAVLLPANA. Residues 145–164 are Extracellular-facing; the sequence is CGLLYNRMSLLVCLKYHWVS. The helical transmembrane segment at 165–185 threads the bilayer; that stretch reads VVWLGVLASTACGASMFLLVF. Residues 186-200 are Cytoplasmic-facing; that stretch reads GNCCSSQPPSKFCKL. The helical transmembrane segment at 201-221 threads the bilayer; sequence AQCSGILLFFCRLPLVFYWCL. Residue Arg222 is a topological domain, extracellular. Residues 223-243 form a helical membrane-spanning segment; the sequence is PVIKFLLPFFFPLATLLACID. Residues 244 to 289 lie on the Cytoplasmic side of the membrane; the sequence is SSAKPLLYYLKGRQLRKEPLQVALNRALGEESQSSSGGISLPMSRV.

This sequence belongs to the G-protein coupled receptor 1 family. Mas subfamily.

It is found in the cell membrane. Its function is as follows. Orphan receptor. May regulate nociceptor function and/or development, including the sensation or modulation of pain. The chain is Mas-related G-protein coupled receptor member G (Mrgprg) from Rattus norvegicus (Rat).